The following is a 246-amino-acid chain: Phosphonates import ATP-binding protein PhnC (246 aa).

An ABC transporter domain is found at 2–246; sequence IKFENVSKIY…ILDEVYRKEA (245 aa). 35-42 is an ATP binding site; it reads GTSGAGKS.

Belongs to the ABC transporter superfamily. Phosphonates importer (TC 3.A.1.9.1) family. The complex is composed of two ATP-binding proteins (PhnC), two transmembrane proteins (PhnE) and a solute-binding protein (PhnD).

It localises to the cell membrane. The catalysed reaction is phosphonate(out) + ATP + H2O = phosphonate(in) + ADP + phosphate + H(+). Its function is as follows. Part of the ABC transporter complex PhnCDE involved in phosphonates import. Responsible for energy coupling to the transport system. In Lactococcus lactis subsp. lactis (strain IL1403) (Streptococcus lactis), this protein is Phosphonates import ATP-binding protein PhnC.